The primary structure comprises 240 residues: Tetrahydromethanopterin S-methyltransferase subunit A (240 aa).

Residues Met1 to Lys218 are Cytoplasmic-facing. Residue His85 coordinates 5-hydroxybenzimidazolylcob(I)amide. A helical transmembrane segment spans residues Phe219–Gly239. Arg240 is a topological domain (extracellular).

This sequence belongs to the MtrA family. As to quaternary structure, the complex is composed of 8 subunits; MtrA, MtrB, MtrC, MtrD, MtrE, MtrF, MtrG and MtrH. The cofactor is 5-hydroxybenzimidazolylcob(I)amide.

Its subcellular location is the cell membrane. The enzyme catalyses 5-methyl-5,6,7,8-tetrahydromethanopterin + coenzyme M + 2 Na(+)(in) = 5,6,7,8-tetrahydromethanopterin + methyl-coenzyme M + 2 Na(+)(out). Its pathway is one-carbon metabolism; methanogenesis from CO(2); methyl-coenzyme M from 5,10-methylene-5,6,7,8-tetrahydromethanopterin: step 2/2. In terms of biological role, part of a complex that catalyzes the formation of methyl-coenzyme M and tetrahydromethanopterin from coenzyme M and methyl-tetrahydromethanopterin. This is an energy-conserving, sodium-ion translocating step. The sequence is that of Tetrahydromethanopterin S-methyltransferase subunit A from Methanohalophilus mahii (strain ATCC 35705 / DSM 5219 / SLP).